The following is a 149-amino-acid chain: Calmodulin (149 aa).

An N-acetylalanine modification is found at A2. EF-hand domains follow at residues 8–43, 44–79, 81–116, and 117–149; these read EQIA…LGQN, PTEA…KMKD, DSEE…LGEK, and LTDE…MMAK. Residues D21, D23, D25, T27, E32, D57, D59, N61, T63, E68, D94, D96, N98, and E105 each contribute to the Ca(2+) site. K116 is modified (N6,N6,N6-trimethyllysine). Ca(2+) contacts are provided by D130, D132, D134, Q136, and E141.

The protein belongs to the calmodulin family.

In terms of biological role, calmodulin mediates the control of a large number of enzymes, ion channels and other proteins by Ca(2+). Among the enzymes to be stimulated by the calmodulin-Ca(2+) complex are a number of protein kinases and phosphatases. This chain is Calmodulin, found in Macrocystis pyrifera (Giant kelp).